A 275-amino-acid chain; its full sequence is Formamidopyrimidine-DNA glycosylase (275 aa).

Proline 2 functions as the Schiff-base intermediate with DNA in the catalytic mechanism. Catalysis depends on glutamate 3, which acts as the Proton donor. Lysine 58 serves as the catalytic Proton donor; for beta-elimination activity. Positions 93, 111, and 156 each coordinate DNA. The FPG-type zinc finger occupies 241–275; the sequence is FVYDRAGQPCRVCGTPIRQIVQGQRSTYYCPTCQR. The Proton donor; for delta-elimination activity role is filled by arginine 265.

The protein belongs to the FPG family. In terms of assembly, monomer. Zn(2+) is required as a cofactor.

It catalyses the reaction Hydrolysis of DNA containing ring-opened 7-methylguanine residues, releasing 2,6-diamino-4-hydroxy-5-(N-methyl)formamidopyrimidine.. The enzyme catalyses 2'-deoxyribonucleotide-(2'-deoxyribose 5'-phosphate)-2'-deoxyribonucleotide-DNA = a 3'-end 2'-deoxyribonucleotide-(2,3-dehydro-2,3-deoxyribose 5'-phosphate)-DNA + a 5'-end 5'-phospho-2'-deoxyribonucleoside-DNA + H(+). Involved in base excision repair of DNA damaged by oxidation or by mutagenic agents. Acts as a DNA glycosylase that recognizes and removes damaged bases. Has a preference for oxidized purines, such as 7,8-dihydro-8-oxoguanine (8-oxoG). Has AP (apurinic/apyrimidinic) lyase activity and introduces nicks in the DNA strand. Cleaves the DNA backbone by beta-delta elimination to generate a single-strand break at the site of the removed base with both 3'- and 5'-phosphates. This Burkholderia cenocepacia (strain ATCC BAA-245 / DSM 16553 / LMG 16656 / NCTC 13227 / J2315 / CF5610) (Burkholderia cepacia (strain J2315)) protein is Formamidopyrimidine-DNA glycosylase.